A 666-amino-acid chain; its full sequence is Probable potassium transport system protein Kup (666 aa).

Helical transmembrane passes span 16–36 (GFIIALGIVYGDIGTSPLYTM), 58–78 (ISLIIWTLTLITTIKYVLIAL), 100–120 (PWLIIPAMIGGATLLSDGALT), 141–161 (IYQNQTNVIITTLVILIVLFG), 165–185 (FGTGFIGKIFGPVMFIWFSFL), 221–241 (IFILGSIFLATTGAEALYSDL), 253–273 (WPFVKVCIVLSYCGQAAWILA), 294–314 (VYLVSLATLAAIIASQALISG), 343–363 (LYIPVINWILFAVTSCTVLYF), 373–393 (YGLAITITMLMTTILLNYYLI), 399–419 (PFLAHLVMTFFALVEFIFFWA), and 424–444 (FMHGGYVVVILALAIVFVMFI).

Belongs to the HAK/KUP transporter (TC 2.A.72) family.

It localises to the cell membrane. It carries out the reaction K(+)(in) + H(+)(in) = K(+)(out) + H(+)(out). Functionally, transport of potassium into the cell. Likely operates as a K(+):H(+) symporter. In Streptococcus pyogenes serotype M6 (strain ATCC BAA-946 / MGAS10394), this protein is Probable potassium transport system protein Kup.